Here is a 1230-residue protein sequence, read N- to C-terminus: Basic-leucine zipper transcription factor A (1230 aa).

4 disordered regions span residues 65-108 (LYLS…NIIN), 180-233 (LNGN…QQHQ), 270-310 (QQLK…PSTQ), and 422-578 (HQQN…RKKD). Composition is skewed to low complexity over residues 69-108 (NSSN…NIIN), 192-233 (NNFS…QQHQ), 270-287 (QQLK…SPQP), 295-310 (PSLQ…PSTQ), and 422-447 (HQQN…QQQH). Polar residues-rich tracts occupy residues 448–458 (KSTPPTQNTPP) and 466–475 (TPTLTTNGKG). Over residues 476-503 (SKSTPPTTTTTTTTTTSSSSSSSSSSSS) the composition is skewed to low complexity. Positions 523-537 (PHHHHHHHNNHHHHH) are enriched in basic residues. Acidic residues predominate over residues 541–554 (FSDENDEEFIDENE). Residues 555–618 (DKSKNKSRSS…LGDVMRPDFD (64 aa)) form the bZIP domain. Residues 556–586 (KSKNKSRSSQNIASRNYRQRKKDHISEVEFK) form a basic motif region. A compositionally biased stretch (polar residues) spans 562-571 (RSSQNIASRN). Residues 590–604 (LSLENERLKQENHLL) form a leucine-zipper region. The stretch at 728–753 (LKIDMELRTERDQLDREIKELFLKKI) forms a coiled coil. Disordered regions lie at residues 772 to 869 (TFNS…EHNK) and 1025 to 1230 (NYTN…TPNI). Low complexity-rich tracts occupy residues 774-803 (NSES…IITP) and 810-831 (NNQN…SNNN). Residues 832–845 (SHHHHHHHHSHLHG) are compositionally biased toward basic residues. Residues 1025–1042 (NYTNSPLITSSPSQLTPN) show a composition bias toward polar residues. 2 stretches are compositionally biased toward low complexity: residues 1052–1146 (NNNN…NNGN) and 1153–1193 (QALH…SPSS).

This sequence belongs to the bZIP family. In terms of assembly, binds DNA as a dimer. Heterodimerizes with dimB; in vitro. Also able to form homodimer; in vitro.

The protein localises to the nucleus. Transcriptional regulator involved in DIF-1 signaling. DIF-1 (Differentiation Inducing Factor-1) is a signal molecule involved in the differentiation of pstO (prestalk-O) cells. Functions both as an activator of prestalk gene expression and a repressor of prespore gene expression. In Dictyostelium discoideum (Social amoeba), this protein is Basic-leucine zipper transcription factor A (dimA).